The sequence spans 377 residues: Protein ECM9 (377 aa).

Its function is as follows. May be involved in cell wall organization and biogenesis. This Saccharomyces cerevisiae (strain ATCC 204508 / S288c) (Baker's yeast) protein is Protein ECM9 (ECM9).